Reading from the N-terminus, the 534-residue chain is Corneodesmosin (534 aa).

Positions methionine 1–alanine 32 are cleaved as a signal peptide. Disordered regions lie at residues phenylalanine 38–serine 252 and cysteine 396–glycine 497. Composition is skewed to low complexity over residues glycine 64–serine 82, glycine 107–alanine 185, serine 200–proline 236, serine 397–serine 415, and proline 431–glycine 446. A compositionally biased stretch (polar residues) spans glycine 454 to leucine 472.

The protein resides in the secreted. Important for the epidermal barrier integrity. The polypeptide is Corneodesmosin (CDSN) (Macaca mulatta (Rhesus macaque)).